Reading from the N-terminus, the 473-residue chain is Glycine--tRNA ligase (473 aa).

The substrate site is built by Arg101 and Glu172. Residues 204–206, 214–219, 289–290, and 333–336 contribute to the ATP site; these read RNE, FRTREF, EL, and GVER. Position 219–223 (219–223) interacts with substrate; it reads FEQME. Position 329–333 (329–333) interacts with substrate; sequence EPSVG.

This sequence belongs to the class-II aminoacyl-tRNA synthetase family. In terms of assembly, homodimer.

Its subcellular location is the cytoplasm. It carries out the reaction tRNA(Gly) + glycine + ATP = glycyl-tRNA(Gly) + AMP + diphosphate. Its function is as follows. Catalyzes the attachment of glycine to tRNA(Gly). This Ureaplasma urealyticum serovar 10 (strain ATCC 33699 / Western) protein is Glycine--tRNA ligase.